Here is a 508-residue protein sequence, read N- to C-terminus: Photosystem II CP47 reaction center protein (508 aa).

6 helical membrane passes run 21 to 36 (SVHI…WAGS), 101 to 115 (IVFS…IWHW), 140 to 156 (GIHL…FGAF), 203 to 218 (IAAG…FHLS), 237 to 252 (VLSS…AFVV), and 457 to 472 (SFAL…HGAR).

The protein belongs to the PsbB/PsbC family. PsbB subfamily. As to quaternary structure, PSII is composed of 1 copy each of membrane proteins PsbA, PsbB, PsbC, PsbD, PsbE, PsbF, PsbH, PsbI, PsbJ, PsbK, PsbL, PsbM, PsbT, PsbX, PsbY, PsbZ, Psb30/Ycf12, at least 3 peripheral proteins of the oxygen-evolving complex and a large number of cofactors. It forms dimeric complexes. The cofactor is Binds multiple chlorophylls. PSII binds additional chlorophylls, carotenoids and specific lipids..

The protein localises to the plastid. The protein resides in the chloroplast thylakoid membrane. Its function is as follows. One of the components of the core complex of photosystem II (PSII). It binds chlorophyll and helps catalyze the primary light-induced photochemical processes of PSII. PSII is a light-driven water:plastoquinone oxidoreductase, using light energy to abstract electrons from H(2)O, generating O(2) and a proton gradient subsequently used for ATP formation. This is Photosystem II CP47 reaction center protein from Gossypium hirsutum (Upland cotton).